We begin with the raw amino-acid sequence, 668 residues long: tRNA 5-methylaminomethyl-2-thiouridine biosynthesis bifunctional protein MnmC (668 aa).

The tRNA (mnm(5)s(2)U34)-methyltransferase stretch occupies residues 1–245 (MKHYSIQPAN…KREMLCGVME (245 aa)). The interval 270-668 (IGGGIASALL…LLKGKAVKAG (399 aa)) is FAD-dependent cmnm(5)s(2)U34 oxidoreductase.

The protein in the N-terminal section; belongs to the methyltransferase superfamily. tRNA (mnm(5)s(2)U34)-methyltransferase family. In the C-terminal section; belongs to the DAO family. The cofactor is FAD.

The protein resides in the cytoplasm. It carries out the reaction 5-aminomethyl-2-thiouridine(34) in tRNA + S-adenosyl-L-methionine = 5-methylaminomethyl-2-thiouridine(34) in tRNA + S-adenosyl-L-homocysteine + H(+). Its function is as follows. Catalyzes the last two steps in the biosynthesis of 5-methylaminomethyl-2-thiouridine (mnm(5)s(2)U) at the wobble position (U34) in tRNA. Catalyzes the FAD-dependent demodification of cmnm(5)s(2)U34 to nm(5)s(2)U34, followed by the transfer of a methyl group from S-adenosyl-L-methionine to nm(5)s(2)U34, to form mnm(5)s(2)U34. The protein is tRNA 5-methylaminomethyl-2-thiouridine biosynthesis bifunctional protein MnmC of Shigella flexneri serotype 5b (strain 8401).